The chain runs to 120 residues: Large ribosomal subunit protein bL21 (120 aa).

Belongs to the bacterial ribosomal protein bL21 family. Part of the 50S ribosomal subunit. Contacts protein L20.

In terms of biological role, this protein binds to 23S rRNA in the presence of protein L20. The polypeptide is Large ribosomal subunit protein bL21 (Roseiflexus castenholzii (strain DSM 13941 / HLO8)).